A 331-amino-acid polypeptide reads, in one-letter code: 6-phosphogluconolactonase (331 aa).

This sequence belongs to the cycloisomerase 2 family.

The enzyme catalyses 6-phospho-D-glucono-1,5-lactone + H2O = 6-phospho-D-gluconate + H(+). Its pathway is carbohydrate degradation; pentose phosphate pathway; D-ribulose 5-phosphate from D-glucose 6-phosphate (oxidative stage): step 2/3. In terms of biological role, catalyzes the hydrolysis of 6-phosphogluconolactone to 6-phosphogluconate. In Buchnera aphidicola subsp. Baizongia pistaciae (strain Bp), this protein is 6-phosphogluconolactonase.